The chain runs to 67 residues: Large ribosomal subunit protein bL35 (67 aa).

Positions 1–20 are disordered; it reads MPKLKTKSGAKKRFVPKKSG.

The protein belongs to the bacterial ribosomal protein bL35 family.

The chain is Large ribosomal subunit protein bL35 from Anaeromyxobacter dehalogenans (strain 2CP-1 / ATCC BAA-258).